Consider the following 300-residue polypeptide: ETS homologous factor (300 aa).

In terms of domain architecture, PNT spans 29–115 (STCNVSSGFF…SNLQHLKWNG (87 aa)). The interval 183–202 (ESPDMKKEQDPPAKCHTKKH) is disordered. Residues 185-195 (PDMKKEQDPPA) show a composition bias toward basic and acidic residues. The segment at residues 207-289 (THLWEFIRDI…DGRRLVYKFG (83 aa)) is a DNA-binding region (ETS).

This sequence belongs to the ETS family.

The protein localises to the nucleus. Its function is as follows. Transcriptional activator that may play a role in regulating epithelial cell differentiation and proliferation. May act as a repressor for a specific subset of ETS/AP-1-responsive genes, and as a modulator of the nuclear response to mitogen-activated protein kinase signaling cascades. Binds to DNA sequences containing the consensus nucleotide core sequence GGAA. Involved in regulation of TNFRSF10B/DR5 expression through Ets-binding sequences on the TNFRSF10B/DR5 promoter. This is ETS homologous factor (EHF) from Pan paniscus (Pygmy chimpanzee).